The primary structure comprises 78 residues: Small outer capsid protein (78 aa).

It belongs to the Tevenvirinae Soc family. In terms of assembly, homotrimer. Interacts with the major capsid protein; three soc molecules associate with each interface between the major capsid protein facets.

Its subcellular location is the virion. In terms of biological role, capsid decoration protein which helps to stabilize the capsid against extremes of pH and temperature. Once maturation and expansion of the capsid has occured, trimers of soc attach the interfaces between the hexamer of the major capsid protein. Acts as a 'glue' between neighboring hexameric capsomers. Dispensable for the head morphogenesis and phage infection. The protein is Small outer capsid protein of Escherichia phage RB69 (Bacteriophage RB69).